Here is a 426-residue protein sequence, read N- to C-terminus: Glutamyl-tRNA reductase (426 aa).

Residues 49–52 (TCNR), S109, 114–116 (EGQ), and Q120 contribute to the substrate site. The active-site Nucleophile is the C50. 189–194 (GAGETG) contacts NADP(+).

Belongs to the glutamyl-tRNA reductase family. Homodimer.

It carries out the reaction (S)-4-amino-5-oxopentanoate + tRNA(Glu) + NADP(+) = L-glutamyl-tRNA(Glu) + NADPH + H(+). The protein operates within porphyrin-containing compound metabolism; protoporphyrin-IX biosynthesis; 5-aminolevulinate from L-glutamyl-tRNA(Glu): step 1/2. In terms of biological role, catalyzes the NADPH-dependent reduction of glutamyl-tRNA(Glu) to glutamate 1-semialdehyde (GSA). This Chlorobaculum parvum (strain DSM 263 / NCIMB 8327) (Chlorobium vibrioforme subsp. thiosulfatophilum) protein is Glutamyl-tRNA reductase (hemA).